The following is a 962-amino-acid chain: Protease 3 (962 aa).

The first 23 residues, 1 to 23 (MPRSIWFKALLLFVALWAPLSQA), serve as a signal peptide directing secretion. A Zn(2+)-binding site is contributed by H88. E91 acts as the Proton acceptor in catalysis. H92 and E169 together coordinate Zn(2+).

The protein belongs to the peptidase M16 family. As to quaternary structure, monomer. It depends on Zn(2+) as a cofactor.

It is found in the periplasm. The enzyme catalyses Preferential cleavage of 16-Tyr-|-Leu-17 and 25-Phe-|-Tyr-26 bonds of oxidized insulin B chain. Also acts on other substrates of Mw less than 7 kDa such as insulin and glucagon.. Its function is as follows. Endopeptidase that degrades small peptides of less than 7 kDa, such as glucagon and insulin. This chain is Protease 3 (ptrA), found in Escherichia coli O6:H1 (strain CFT073 / ATCC 700928 / UPEC).